The following is a 785-amino-acid chain: Probable splicing factor 3A subunit 1 (785 aa).

Met1 bears the N-acetylmethionine mark. The interval 1-42 (MFSSMQILPLEAPPTDGKLGPLPPSQLTDQEVEERELQAEQN) is disordered. One copy of the SURP motif 1 repeat lies at 71–113 (IVEKTAQFVSKNGLEFEKRIIVSNEKNAKFNFLKSSDPYHAFY). The segment at 124 to 175 (NKDGAQGTDDSDGTTDPQLDTGAADESEAGDTQPDLQAQFRIPSKPLEAPEP) is disordered. An SURP motif 2 repeat occupies 193–235 (IIKLTAQFVARNGKSFLTGLSNRENNNPQFHFMKPTHSMFTFF). Disordered stretches follow at residues 522-554 (NANGEEQGDGVYGDPNSFPGPAALPPPRPGVPI) and 639-713 (RPYG…PNEN). Pro residues-rich tracts occupy residues 543 to 554 (AALPPPRPGVPI) and 653 to 674 (QPPPMPGMAPPPPPEEAPPPLP). The span at 677–686 (PEAKRQKFDE) shows a compositional bias: basic and acidic residues. Residues 707 to 782 (VSKPNENDGQ…LTLSLRERGG (76 aa)) form the Ubiquitin-like domain.

As to quaternary structure, component of splicing factor SF3A which is composed of three subunits.

The protein resides in the nucleus. The sequence is that of Probable splicing factor 3A subunit 1 from Arabidopsis thaliana (Mouse-ear cress).